A 373-amino-acid polypeptide reads, in one-letter code: MVKWSELPPEILHLISLKIDNPFDLIHFRSVCSFWRSSSLLKFRHMTSLRCPLPLDPGGCGDDCHILSSRVYLLKCPNRDRPQYWMFKLQAKENGEVVLHSLFLRRNSSAYGCLYPSLSIDLLNCQIFELAQEHVACYSEWFELFECISKCEERIGFMGLNREKNEYMILGKLSFNGLAMYRSVDNRWTELEITPDSFFEGIVPFKGKFYAIDRTGKTTVVDPTLEVNTFQRSRPCDKTRKRWLLMTGDKLILVEMCTKSRYDFHIPNIREKKIWFEISELNEERNDWDQVEDMDGRVLFLEHYCTFSCLATEIPGFRANSIIFMDLWGGSNSYELESILVYEFNEKGVRSLRDKLEYIELFPFPPGWVISNG.

Residues 2–50 (VKWSELPPEILHLISLKIDNPFDLIHFRSVCSFWRSSSLLKFRHMTSLR) form the F-box domain. 2 Kelch repeats span residues 165-207 (NEYM…PFKG) and 262-308 (YDFH…CTFS).

This is Putative F-box/kelch-repeat protein At5g24040 from Arabidopsis thaliana (Mouse-ear cress).